We begin with the raw amino-acid sequence, 546 residues long: Carotenoid 9,10(9',10')-cleavage dioxygenase (546 aa).

Residues His226, His274, His340, and His530 each coordinate Fe cation.

This sequence belongs to the carotenoid oxygenase family. The cofactor is Fe(2+). As to expression, in vegetative and floral tissues.

The protein resides in the cytoplasm. It catalyses the reaction all-trans-zeaxanthin + 2 O2 = 4,9-dimethyldodeca-2,4,6,8,10-pentaenedial + 2 (3R)-hydroxy-beta-ionone. Its function is as follows. Cleaves a variety of carotenoids symmetrically at both the 9-10 and 9'-10' double bonds. Catalyzes the formation of 4,9-dimethyldodeca-2,4,6,8,10-pentaene-1,12-dialdehyde and probably hydroxydihydro-beta-ionone from zeaxanthin. The sequence is that of Carotenoid 9,10(9',10')-cleavage dioxygenase (CCD) from Crocus sativus (Saffron).